The sequence spans 264 residues: Teichoic acids export ATP-binding protein TagH (264 aa).

The region spanning 5–243 is the ABC transporter domain; that stretch reads VNIKNVTKEY…YEAFLNDFKK (239 aa). 57 to 64 serves as a coordination point for ATP; it reads GINGSGKS.

The protein belongs to the ABC transporter superfamily. Teichoic acids exporter (TC 3.A.1.104.1) family. In terms of assembly, the complex is composed of two ATP-binding proteins (TagH) and two transmembrane proteins (TagG).

The protein resides in the cell membrane. It catalyses the reaction ATP + H2O + teichoic acidSide 1 = ADP + phosphate + teichoic acidSide 2.. Its function is as follows. Part of the ABC transporter complex TagGH involved in teichoic acids export. Responsible for energy coupling to the transport system. The sequence is that of Teichoic acids export ATP-binding protein TagH from Staphylococcus aureus (strain Mu50 / ATCC 700699).